Reading from the N-terminus, the 288-residue chain is Serine/threonine-protein acetyltransferase YopJ (288 aa).

Active-site residues include H109 and E128. H109 contributes to the CoA binding site. 167-168 (RS) provides a ligand contact to CoA. C172 is a catalytic residue. 1D-myo-inositol hexakisphosphate contacts are provided by residues 182-185 (KLYI) and 224-225 (KH). CoA is bound at residue 227–230 (QGKK). R257 serves as a coordination point for 1D-myo-inositol hexakisphosphate. A CoA-binding site is contributed by 266–270 (DGKEL).

The protein belongs to the acetyltransferase YopJ family. 1D-myo-inositol hexakisphosphate is required as a cofactor.

Its subcellular location is the secreted. It carries out the reaction L-threonyl-[protein] + acetyl-CoA = O-acetyl-L-threonyl-[protein] + CoA. The catalysed reaction is L-seryl-[protein] + acetyl-CoA = O-acetyl-L-seryl-[protein] + CoA. Its activity is regulated as follows. 1D-myo-inositol hexakisphosphate activates protein-acetyltransferase activity via an allosteric mechanism: 1D-myo-inositol hexakisphosphate-binding induces a conformational rearrangement that stimulates the interaction with acetyl-CoA. Its function is as follows. Serine/threonine-protein acetyltransferase translocated into infected cells, which inhibits the host immune response and induces cell death by mediating acetylation of target proteins. Inhibits the MAPK and NF-kappa-B signaling pathways by acetylating protein-kinases such as MAP2K1, MAP2K6, MAP3K7/TAK1 and I-kappa-B kinase (CHUK/IKKA and IKBKB) on serine and threonine residues critical for their activation by phosphorylation, thereby preventing protein-kinase activation. Promotes pyroptosis, a programmed cell death, in host cells by mediating acetylation of MAP3K7/TAK1: MAP3K7/TAK1 inactivation triggers activation of caspase-8 (CASP8), followed by CASP8-dependent cleavage of gasdermin-D (GSDMD) and induction of pyroptosis. Also able to induce intestinal barrier dysfunction by acetylating and inhibiting host protein-kinases RIPK2/RICK and MAP3K7/TAK1, thereby promoting cell death. The chain is Serine/threonine-protein acetyltransferase YopJ from Yersinia pseudotuberculosis serotype I (strain IP32953).